The sequence spans 938 residues: Isoleucine--tRNA ligase (938 aa).

Residues P58–H68 carry the 'HIGH' region motif. Position 563 (E563) interacts with L-isoleucyl-5'-AMP. A 'KMSKS' region motif is present at residues K604–S608. K607 is an ATP binding site. Residues C903, C906, C921, and C924 each contribute to the Zn(2+) site.

It belongs to the class-I aminoacyl-tRNA synthetase family. IleS type 1 subfamily. Monomer. The cofactor is Zn(2+).

The protein resides in the cytoplasm. It catalyses the reaction tRNA(Ile) + L-isoleucine + ATP = L-isoleucyl-tRNA(Ile) + AMP + diphosphate. Functionally, catalyzes the attachment of isoleucine to tRNA(Ile). As IleRS can inadvertently accommodate and process structurally similar amino acids such as valine, to avoid such errors it has two additional distinct tRNA(Ile)-dependent editing activities. One activity is designated as 'pretransfer' editing and involves the hydrolysis of activated Val-AMP. The other activity is designated 'posttransfer' editing and involves deacylation of mischarged Val-tRNA(Ile). This chain is Isoleucine--tRNA ligase, found in Buchnera aphidicola subsp. Schizaphis graminum (strain Sg).